A 465-amino-acid polypeptide reads, in one-letter code: 3-isopropylmalate dehydratase large subunit (465 aa).

Positions 346, 406, and 409 each coordinate [4Fe-4S] cluster.

The protein belongs to the aconitase/IPM isomerase family. LeuC type 1 subfamily. As to quaternary structure, heterodimer of LeuC and LeuD. [4Fe-4S] cluster serves as cofactor.

The catalysed reaction is (2R,3S)-3-isopropylmalate = (2S)-2-isopropylmalate. It functions in the pathway amino-acid biosynthesis; L-leucine biosynthesis; L-leucine from 3-methyl-2-oxobutanoate: step 2/4. In terms of biological role, catalyzes the isomerization between 2-isopropylmalate and 3-isopropylmalate, via the formation of 2-isopropylmaleate. The sequence is that of 3-isopropylmalate dehydratase large subunit from Psychromonas ingrahamii (strain DSM 17664 / CCUG 51855 / 37).